The following is a 476-amino-acid chain: ATP synthase subunit beta (476 aa).

ATP is bound at residue 157-164 (GGAGVGKT).

The protein belongs to the ATPase alpha/beta chains family. F-type ATPases have 2 components, CF(1) - the catalytic core - and CF(0) - the membrane proton channel. CF(1) has five subunits: alpha(3), beta(3), gamma(1), delta(1), epsilon(1). CF(0) has three main subunits: a(1), b(2) and c(9-12). The alpha and beta chains form an alternating ring which encloses part of the gamma chain. CF(1) is attached to CF(0) by a central stalk formed by the gamma and epsilon chains, while a peripheral stalk is formed by the delta and b chains.

The protein resides in the cell membrane. It catalyses the reaction ATP + H2O + 4 H(+)(in) = ADP + phosphate + 5 H(+)(out). In terms of biological role, produces ATP from ADP in the presence of a proton gradient across the membrane. The catalytic sites are hosted primarily by the beta subunits. In Mycoplasma genitalium (strain ATCC 33530 / DSM 19775 / NCTC 10195 / G37) (Mycoplasmoides genitalium), this protein is ATP synthase subunit beta.